A 970-amino-acid polypeptide reads, in one-letter code: Disks large 1 tumor suppressor protein (970 aa).

An L27 domain is found at 4–64; the sequence is KKQEAHRALE…FYELTLLDDS (61 aa). The tract at residues 161–209 is disordered; it reads TENAKEPTVEQQQKQQQAQQRSSRSPQQQNPQQQQGSKSRSGSQTVNGD. A compositionally biased stretch (low complexity) spans 171–204; the sequence is QQQKQQQAQQRSSRSPQQQNPQQQQGSKSRSGSQ. PDZ domains lie at 216–303 and 330–421; these read DIQL…KRKR and EIDL…GKTQ. Positions 424–477 are disordered; sequence TTSASGGGGGGLSSGQQLSQSQSQLATSQSQSQVHQQQHATPMVNSQSTEPGSR. The segment covering 437-462 has biased composition (low complexity); it reads SGQQLSQSQSQLATSQSQSQVHQQQH. A compositionally biased stretch (polar residues) spans 466 to 477; that stretch reads MVNSQSTEPGSR. Position 496 is a phosphoserine (S496). The 82-residue stretch at 506–587 folds into the PDZ 3 domain; it reads TITIQKGPQG…VVTLLAQYRP (82 aa). Residues 620 to 690 form the SH3 domain; sequence KRSLYVRALF…PSKRRWERKM (71 aa). T714 is subject to Phosphothreonine. The region spanning 780-955 is the Guanylate kinase-like domain; it reads TRPVIILGPL…IYSKVKSMIW (176 aa).

Belongs to the MAGUK family. In terms of tissue distribution, during the cellular blastoderm stage, isoform B, isoform F, isoform H, isoform I and isoform L expression is localized to the cell borders. From stage 11 onwards, expression is found predominantly in the developing nervous system: axon bundles in the ventral cord and the brain. Stage 14 and 15 embryos exhibit expression in the developing body wall muscle. Expression in neuropil regions of the CNS and at NMJs persists through to larval development. Other isoforms show expression in embryonic epithelial cells. In larvae, expression is seen as a belt around salivary glands, imaginal disks and proventriculus. Expressed in adult reproductive tissues. In epithelia, coexpressed with scrib throughout development.

Its subcellular location is the cytoplasm. It localises to the cell membrane. The protein localises to the basolateral cell membrane. The protein resides in the cytoskeleton. It is found in the cell junction. Its subcellular location is the septate junction. Its function is as follows. During embryonic development, some isoforms are essential for proper neuronal differentiation and organization. Required for cell polarity; maintenance of apicobasal polarity. Plays a critical role at septate junctions in cellular growth control during larval development. The presence of a guanylate kinase domain suggests involvement in cellular adhesion as well as signal transduction to control cellular proliferation. In Drosophila melanogaster (Fruit fly), this protein is Disks large 1 tumor suppressor protein (dlg1).